Reading from the N-terminus, the 596-residue chain is Selenocysteine-specific elongation factor (596 aa).

The tr-type G domain maps to 5–217 (RVNVNVGVLG…LLTSQISIPT (213 aa)). Residues 14–21 (GHIDSGKT) are G1. GDP is bound by residues G19, T21, and A22. 3 residues coordinate GTP: G19, T21, and A22. Mg(2+) is bound at residue T21. Residues 46 to 50 (GITLD) are G2. Mg(2+)-binding residues include T48 and D92. A G3 region spans residues 92–95 (DCPG). Residues 146–149 (NKID) form a G4 region. GDP-binding residues include D149 and K187. GTP is bound by residues D149 and K187. The G5 stretch occupies residues 185–187 (AAK). S537 is subject to Phosphoserine. A Phosphothreonine modification is found at T545. A Nuclear localization signal motif is present at residues 547–553 (ALKKRAR). The interval 548 to 573 (LKKRARAGRGEATRQEESAERSEPSQ) is disordered. Positions 555–571 (GRGEATRQEESAERSEP) are enriched in basic and acidic residues. R556 bears the Omega-N-methylarginine mark.

It belongs to the TRAFAC class translation factor GTPase superfamily. Classic translation factor GTPase family. SelB subfamily. Mg(2+) serves as cofactor. It depends on Mn(2+) as a cofactor.

The protein localises to the cytoplasm. It localises to the nucleus. The enzyme catalyses GTP + H2O = GDP + phosphate + H(+). Functionally, translation factor required for the incorporation of the rare amino acid selenocysteine encoded by UGA codons. Replaces the eRF1-eRF3-GTP ternary complex for the insertion of selenocysteine directed by the UGA codon. Insertion of selenocysteine at UGA codons is mediated by SECISBP2 and EEFSEC: SECISBP2 (1) specifically binds the SECIS sequence once the 80S ribosome encounters an in-frame UGA codon and (2) contacts the RPS27A/eS31 of the 40S ribosome before ribosome stalling. (3) GTP-bound EEFSEC then delivers selenocysteinyl-tRNA(Sec) to the 80S ribosome and adopts a preaccommodated state conformation. (4) After GTP hydrolysis, EEFSEC dissociates from the assembly, selenocysteinyl-tRNA(Sec) accommodates, and peptide bond synthesis and selenoprotein elongation occur. This chain is Selenocysteine-specific elongation factor, found in Homo sapiens (Human).